The primary structure comprises 541 residues: Lysosomal cobalamin transport escort protein LMBD1 (541 aa).

Residues 1–11 (MATPVALLSES) lie on the Extracellular side of the membrane. A helical membrane pass occupies residues 12-31 (VLGWSIFTVVLLVILAFCWV). The Cytoplasmic portion of the chain corresponds to 32-50 (YIRKYQSRQESEVISTITA). A helical membrane pass occupies residues 51 to 71 (ICALAIALITSALLPVDIFLV). The Extracellular segment spans residues 72–101 (SFMKHPNGTYKEWAANNETRVQIEDTVLYG). N-linked (GlcNAc...) asparagine glycans are attached at residues asparagine 78 and asparagine 88. Residues 102–122 (YYTLYSIILFCVFLWIPFVYF) form a helical membrane-spanning segment. Topologically, residues 123 to 145 (YYEEKDEDNNNKCLQVKNALKYT) are cytoplasmic. Residues 146-166 (IGFVIVCSALLLIGTFVPLAS) form a helical membrane-spanning segment. At 167–189 (PPNQNSTQWQKVQYLFEELGSSH) the chain is on the extracellular side. Residue asparagine 171 is glycosylated (N-linked (GlcNAc...) asparagine). A helical transmembrane segment spans residues 190–210 (GLAALSFSISSLTLIGMLAVI). The Cytoplasmic segment spans residues 211 to 306 (TYTAYGMSVL…KVGSALRPMK (96 aa)). Residues 307–327 (ILLGVFFILVALLFFVTLFIS) form a helical membrane-spanning segment. Residues 328 to 365 (NLDKALHSAGISTGFIIFGTNLTNPLNELLLALQPVFP) are Extracellular-facing. Asparagine 348 is a glycosylation site (N-linked (GlcNAc...) asparagine). A helical membrane pass occupies residues 366 to 386 (LDYVLITVITMYFVFTSMAGI). The Cytoplasmic portion of the chain corresponds to 387–409 (RNMGIWFFWIRLYKIRPQRTRPQ). The helical transmembrane segment at 410-430 (ALLFLCMILLLIVLHTSYMIY) threads the bilayer. Residues 431–488 (SLAPQYVMYGSQKYLLQTPLPTAVPSQSNRSATITKICDADAPEDQCTVTRSYLFLHK) lie on the Extracellular side of the membrane. Asparagine 459 carries an N-linked (GlcNAc...) asparagine glycan. A helical transmembrane segment spans residues 489–509 (FWFFSTIYYFGNWAFLGVFLI). Over 510 to 541 (GLVVSCCKGKKSVIEGEVDADDSDFSDDEYVH) the chain is Cytoplasmic.

The protein belongs to the LIMR family. LMBRD1 subfamily.

Its subcellular location is the endoplasmic reticulum membrane. The protein localises to the lysosome membrane. The protein resides in the cell membrane. Its function is as follows. Lysosomal membrane chaperone required to export cobalamin (vitamin B12) from the lysosome to the cytosol, allowing its conversion to cofactors. Targets ABCD4 transporter from the endoplasmic reticulum to the lysosome. Then forms a complex with lysosomal ABCD4 and cytoplasmic MMACHC to transport cobalamin across the lysosomal membrane. May play a role in mediating and regulating the internalization of the insulin receptor. The protein is Lysosomal cobalamin transport escort protein LMBD1 (lmbrd1) of Danio rerio (Zebrafish).